The primary structure comprises 520 residues: Peptide chain release factor 3 (520 aa).

In terms of domain architecture, tr-type G spans 8–277 (ESRKTFAIIS…FAPMPNARQT (270 aa)). Residues 17–24 (SHPDAGKT), 85–89 (DTPGH), and 139–142 (NKLD) contribute to the GTP site.

This sequence belongs to the TRAFAC class translation factor GTPase superfamily. Classic translation factor GTPase family. PrfC subfamily.

Its subcellular location is the cytoplasm. Functionally, increases the formation of ribosomal termination complexes and stimulates activities of RF-1 and RF-2. It binds guanine nucleotides and has strong preference for UGA stop codons. It may interact directly with the ribosome. The stimulation of RF-1 and RF-2 is significantly reduced by GTP and GDP, but not by GMP. The chain is Peptide chain release factor 3 from Staphylococcus aureus (strain MRSA252).